Here is a 79-residue protein sequence, read N- to C-terminus: Pulmonary surfactant-associated protein B (79 aa).

Positions 4-79 (PLPFCWLCRT…VCGLVLRCSS (76 aa)) constitute a Saposin B-type domain. 3 cysteine pairs are disulfide-bonded: Cys-8-Cys-77, Cys-11-Cys-71, and Cys-35-Cys-46.

As to quaternary structure, homodimer; disulfide-linked.

It localises to the secreted. The protein localises to the extracellular space. Its subcellular location is the surface film. Functionally, pulmonary surfactant-associated proteins promote alveolar stability by lowering the surface tension at the air-liquid interface in the peripheral air spaces. SP-B increases the collapse pressure of palmitic acid to nearly 70 millinewtons per meter. This chain is Pulmonary surfactant-associated protein B (SFTPB), found in Sus scrofa (Pig).